A 904-amino-acid chain; its full sequence is DNA mismatch repair protein MutS (904 aa).

Position 638-645 (638-645 (GPNMAGKS)) interacts with ATP. The tract at residues 825-869 (KSKADGTRRPASYHEAQPLLPGMPEPPSTASAEPPQTVTPPEPPV) is disordered.

This sequence belongs to the DNA mismatch repair MutS family.

In terms of biological role, this protein is involved in the repair of mismatches in DNA. It is possible that it carries out the mismatch recognition step. This protein has a weak ATPase activity. In Oleidesulfovibrio alaskensis (strain ATCC BAA-1058 / DSM 17464 / G20) (Desulfovibrio alaskensis), this protein is DNA mismatch repair protein MutS.